Consider the following 200-residue polypeptide: Molybdenum cofactor guanylyltransferase (200 aa).

Residues 10–12 (LAG), lysine 23, asparagine 51, aspartate 69, and aspartate 99 contribute to the GTP site. Aspartate 99 provides a ligand contact to Mg(2+).

Belongs to the MobA family. In terms of assembly, monomer. Requires Mg(2+) as cofactor.

The protein localises to the cytoplasm. It carries out the reaction Mo-molybdopterin + GTP + H(+) = Mo-molybdopterin guanine dinucleotide + diphosphate. In terms of biological role, transfers a GMP moiety from GTP to Mo-molybdopterin (Mo-MPT) cofactor (Moco or molybdenum cofactor) to form Mo-molybdopterin guanine dinucleotide (Mo-MGD) cofactor. This chain is Molybdenum cofactor guanylyltransferase, found in Shewanella halifaxensis (strain HAW-EB4).